Reading from the N-terminus, the 184-residue chain is UPF0340 protein TTE0860 (184 aa).

This sequence belongs to the UPF0340 family.

The protein is UPF0340 protein TTE0860 of Caldanaerobacter subterraneus subsp. tengcongensis (strain DSM 15242 / JCM 11007 / NBRC 100824 / MB4) (Thermoanaerobacter tengcongensis).